Here is a 451-residue protein sequence, read N- to C-terminus: Interferon-related developmental regulator 1 (451 aa).

The segment covering 1-10 (MPKNKKRNTP) has biased composition (basic residues). The segment at 1-69 (MPKNKKRNTP…PSSFAEDGPE (69 aa)) is disordered. Over residues 23-33 (AAAATAATAGG) the composition is skewed to low complexity. The segment covering 49-61 (ETMSHCSGYSDPS) has biased composition (polar residues).

This sequence belongs to the IFRD family. Interacts with PSIP1/LEDGF. In terms of tissue distribution, expressed in a variety of tissues.

In terms of biological role, could play a role in regulating gene activity in the proliferative and/or differentiative pathways induced by NGF. May be an autocrine factor that attenuates or amplifies the initial ligand-induced signal. The sequence is that of Interferon-related developmental regulator 1 (IFRD1) from Homo sapiens (Human).